The following is a 165-amino-acid chain: Protein NKG7 (165 aa).

The next 4 membrane-spanning stretches (helical) occupy residues 9 to 29, 61 to 81, 92 to 112, and 133 to 153; these read LLTS…NFWF, FCIL…MSCI, IVST…MTVY, and FYLG…SLGA.

Belongs to the PMP-22/EMP/MP20 family.

It is found in the cell membrane. The protein resides in the cytolytic granule membrane. Regulates cytotoxic granule exocytosis in effector lymphocytes, thus acting as a critical mediator of inflammation in a broad range of infectious and non-infectious diseases. Essential for cytotoxic degranulation of natural killer (NK) cells and CD8(+) T-cells and for the activation of CD4(+) T-cells following infection. Plays a critical role in CD8(+) T-cell and NK cell-mediated cytolysis of target cells and contributes to the cytolytic activity via the perforin/granzyme pathway by enhancing exocytosis of LAMP1-carrying lytic granules. Contributes to NK cell-mediated control of cancer metastasis. The chain is Protein NKG7 (NKG7) from Bos taurus (Bovine).